Reading from the N-terminus, the 116-residue chain is Nucleoid-associated protein PMM0020 (116 aa).

Residues 87–98 (ESSTTTMKERMN) are compositionally biased toward basic and acidic residues. The disordered stretch occupies residues 87–116 (ESSTTTMKERMNDLTGGLNLNLPGLDNNDS). The span at 99-116 (DLTGGLNLNLPGLDNNDS) shows a compositional bias: low complexity.

The protein belongs to the YbaB/EbfC family. As to quaternary structure, homodimer.

The protein localises to the cytoplasm. Its subcellular location is the nucleoid. Its function is as follows. Binds to DNA and alters its conformation. May be involved in regulation of gene expression, nucleoid organization and DNA protection. The chain is Nucleoid-associated protein PMM0020 from Prochlorococcus marinus subsp. pastoris (strain CCMP1986 / NIES-2087 / MED4).